Here is a 424-residue protein sequence, read N- to C-terminus: MKLEMICTGEEVLAGQIVDTNAAWFANLMMENGIEVQRRVTVGDRLEDLVAVFQERSLHADVILVNGGLGPTSDDMSAEAMAKAKGESLVENAEWAERLHDWFTRHGREMPKSNIKQAWLPESAVMVDNPVGTACGFRVKLNRAWLFFTPGVPFEFKQMVEEQFLPFVKATFDAGSQVALRKLLTLGRGESSLADELEAMALPAGITLGYRSFMPYIEIKVFARGVEAIKALGAVTDEIAARLGNVVVAHNRTSLEEEIHARLNNSGISLSVAESCTGGLITSQLVGFPGSSSYLHQGLVTYSNESKVRVLGVSPQTLDDYGAVSIQTVEEMAKGARAILDSDFALATSGIAGPDGGTEEKPVGTVAIALATKGGVYSQMVKLPRRSRDMVRKVSAAVAYDMLRRELNGEAVIVDYSSISRYPK.

It belongs to the CinA family.

This Shewanella amazonensis (strain ATCC BAA-1098 / SB2B) protein is CinA-like protein.